Reading from the N-terminus, the 204-residue chain is Protein GrpE (204 aa).

Composition is skewed to basic and acidic residues over residues methionine 1–glycine 21 and glutamate 36–lysine 46. Residues methionine 1–lysine 46 form a disordered region.

Belongs to the GrpE family. Homodimer.

The protein localises to the cytoplasm. In terms of biological role, participates actively in the response to hyperosmotic and heat shock by preventing the aggregation of stress-denatured proteins, in association with DnaK and GrpE. It is the nucleotide exchange factor for DnaK and may function as a thermosensor. Unfolded proteins bind initially to DnaJ; upon interaction with the DnaJ-bound protein, DnaK hydrolyzes its bound ATP, resulting in the formation of a stable complex. GrpE releases ADP from DnaK; ATP binding to DnaK triggers the release of the substrate protein, thus completing the reaction cycle. Several rounds of ATP-dependent interactions between DnaJ, DnaK and GrpE are required for fully efficient folding. This is Protein GrpE from Caldanaerobacter subterraneus subsp. tengcongensis (strain DSM 15242 / JCM 11007 / NBRC 100824 / MB4) (Thermoanaerobacter tengcongensis).